The following is a 285-amino-acid chain: Energy-coupling factor transporter ATP-binding protein EcfA3 (285 aa).

The region spanning 6-242 (LKVEELNYNY…KEVIRKVNLR (237 aa)) is the ABC transporter domain. 39–46 (GGNGVGKS) contributes to the ATP binding site.

Belongs to the ABC transporter superfamily. Energy-coupling factor EcfA family. In terms of assembly, forms a stable energy-coupling factor (ECF) transporter complex composed of 2 membrane-embedded substrate-binding proteins (S component), 2 ATP-binding proteins (A component) and 2 transmembrane proteins (T component).

The protein resides in the cell membrane. In terms of biological role, ATP-binding (A) component of a common energy-coupling factor (ECF) ABC-transporter complex. Unlike classic ABC transporters this ECF transporter provides the energy necessary to transport a number of different substrates. The chain is Energy-coupling factor transporter ATP-binding protein EcfA3 from Clostridium perfringens (strain ATCC 13124 / DSM 756 / JCM 1290 / NCIMB 6125 / NCTC 8237 / Type A).